Consider the following 1053-residue polypeptide: Mediator of RNA polymerase II transcription subunit 16 (1053 aa).

A disordered region spans residues 139-170 (KTEGNTEKNKDTKQIGNGSGTNGHGDSPINTP). Positions 142 to 151 (GNTEKNKDTK) are enriched in basic and acidic residues.

The protein belongs to the Mediator complex subunit 16 family. Component of the Mediator complex.

It localises to the nucleus. In terms of biological role, component of the Mediator complex, a coactivator involved in the regulated transcription of nearly all RNA polymerase II-dependent genes. Mediator functions as a bridge to convey information from gene-specific regulatory proteins to the basal RNA polymerase II transcription machinery. Mediator is recruited to promoters by direct interactions with regulatory proteins and serves as a scaffold for the assembly of a functional preinitiation complex with RNA polymerase II and the general transcription factors. The polypeptide is Mediator of RNA polymerase II transcription subunit 16 (SIN4) (Candida albicans (strain SC5314 / ATCC MYA-2876) (Yeast)).